Here is a 383-residue protein sequence, read N- to C-terminus: Prokineticin receptor 2 (383 aa).

Residues 1 to 54 (MGDQNGNTSFAPDLNPPQDHVSLLPLNYSYGDYDIPLDDDEDVTKTQTFFAAKI) lie on the Extracellular side of the membrane. 2 N-linked (GlcNAc...) asparagine glycosylation sites follow: Asn7 and Asn27. The helical transmembrane segment at 55–75 (VIGVALAGIMLVCGVGNFVFI) threads the bilayer. Over 76–89 (AALARYKKLRNLTN) the chain is Cytoplasmic. A helical membrane pass occupies residues 90 to 110 (LLIANLAISDFLVAIVCCPFE). Residues 111–136 (MDYYVVRQLSWEHGHVLCASVNYLRT) are Extracellular-facing. Cysteines 128 and 207 form a disulfide. The helical transmembrane segment at 137 to 157 (VSLYVSTNALLAIAIDRYLAI) threads the bilayer. The Cytoplasmic segment spans residues 158 to 170 (VHPLKRMNYQTAS). Residues 171–191 (FLIALVWMVSILIAIPSAYFT) form a helical membrane-spanning segment. Residues 192 to 222 (TETILVIVKNQEKLFCGQIWPVDQQLYYKSY) are Extracellular-facing. Residues 223-243 (FLFVFGLEFVGPVVTMTLCYA) form a helical membrane-spanning segment. Residues 244–272 (RISQELWFKAVPGFQTEQIRKRLRCRRKT) lie on the Cytoplasmic side of the membrane. Residues 273-293 (VLLLMGILTAYVLCWAPFYGF) traverse the membrane as a helical segment. Residues 294–312 (TIVRDFFPTLVVKEKHYLT) are Extracellular-facing. A helical transmembrane segment spans residues 313 to 333 (AFYVVECIAMSNSMINTICFV). Residues 334–383 (TVKNNTMKYFKKMLLLHWRPSHYGSKSSADLDLKTSGVPATEEVDCIRLK) lie on the Cytoplasmic side of the membrane.

The protein belongs to the G-protein coupled receptor 1 family. Homodimer. Abundantly expressed in the CNS and reproductive organs with the highest levels in the cerebrum, cerebellum, testis and ovary.

The protein localises to the cell membrane. Functionally, receptor for prokineticin 2. Exclusively coupled to the G(q) subclass of heteromeric G proteins. Activation leads to mobilization of calcium, stimulation of phosphoinositide turnover and activation of p44/p42 mitogen-activated protein kinase. The polypeptide is Prokineticin receptor 2 (Prokr2) (Rattus norvegicus (Rat)).